The primary structure comprises 275 residues: MKIVVAKNIGFCFGVERAIRTVEELLDEGKKVVTDGEIVHNKQVMEKLTKKGLKVSSEITDGEVFVVRAHGIPKDRLEELKRIFPEVVDLTCPIVSQLFKTAQRYAKERKVIVFGKEDHPEMVALKGYAPAIVTKVPFKLEEKKVVFLSQTTSSLEEYKEFVVTMIRMNEFEEAVFLNTICPVTVNREREVEELSRICELSIVVGGRHSSNTGKLFRIASKHSKTIWIESPDELPADVVKYGTVCVFSGTSTPNSLIENVVRKLKEMEGKRDGTI.

Cys12 contributes to the [4Fe-4S] cluster binding site. Residues His40 and His70 each coordinate (2E)-4-hydroxy-3-methylbut-2-enyl diphosphate. Dimethylallyl diphosphate contacts are provided by His40 and His70. Isopentenyl diphosphate contacts are provided by His40 and His70. Cys92 lines the [4Fe-4S] cluster pocket. His119 provides a ligand contact to (2E)-4-hydroxy-3-methylbut-2-enyl diphosphate. His119 provides a ligand contact to dimethylallyl diphosphate. Position 119 (His119) interacts with isopentenyl diphosphate. Glu121 functions as the Proton donor in the catalytic mechanism. Residue Thr151 coordinates (2E)-4-hydroxy-3-methylbut-2-enyl diphosphate. Cys181 contributes to the [4Fe-4S] cluster binding site. Positions 209, 210, 211, and 251 each coordinate (2E)-4-hydroxy-3-methylbut-2-enyl diphosphate. Dimethylallyl diphosphate-binding residues include Ser209, Ser210, Asn211, and Ser251. 4 residues coordinate isopentenyl diphosphate: Ser209, Ser210, Asn211, and Ser251.

This sequence belongs to the IspH family. It depends on [4Fe-4S] cluster as a cofactor.

It carries out the reaction isopentenyl diphosphate + 2 oxidized [2Fe-2S]-[ferredoxin] + H2O = (2E)-4-hydroxy-3-methylbut-2-enyl diphosphate + 2 reduced [2Fe-2S]-[ferredoxin] + 2 H(+). The catalysed reaction is dimethylallyl diphosphate + 2 oxidized [2Fe-2S]-[ferredoxin] + H2O = (2E)-4-hydroxy-3-methylbut-2-enyl diphosphate + 2 reduced [2Fe-2S]-[ferredoxin] + 2 H(+). It functions in the pathway isoprenoid biosynthesis; dimethylallyl diphosphate biosynthesis; dimethylallyl diphosphate from (2E)-4-hydroxy-3-methylbutenyl diphosphate: step 1/1. It participates in isoprenoid biosynthesis; isopentenyl diphosphate biosynthesis via DXP pathway; isopentenyl diphosphate from 1-deoxy-D-xylulose 5-phosphate: step 6/6. Catalyzes the conversion of 1-hydroxy-2-methyl-2-(E)-butenyl 4-diphosphate (HMBPP) into a mixture of isopentenyl diphosphate (IPP) and dimethylallyl diphosphate (DMAPP). Acts in the terminal step of the DOXP/MEP pathway for isoprenoid precursor biosynthesis. The polypeptide is 4-hydroxy-3-methylbut-2-enyl diphosphate reductase (Thermotoga petrophila (strain ATCC BAA-488 / DSM 13995 / JCM 10881 / RKU-1)).